Reading from the N-terminus, the 512-residue chain is 2-isopropylmalate synthase (512 aa).

A Pyruvate carboxyltransferase domain is found at 4–266 (IQFFDTTLRD…ETNIVLNQFK (263 aa)). Mn(2+) contacts are provided by Asp13, His201, His203, and Asn237. The interval 390-512 (ELKHLQVQYV…TKQVDFEEVK (123 aa)) is regulatory domain.

It belongs to the alpha-IPM synthase/homocitrate synthase family. LeuA type 1 subfamily. In terms of assembly, homodimer. It depends on Mn(2+) as a cofactor.

It is found in the cytoplasm. The enzyme catalyses 3-methyl-2-oxobutanoate + acetyl-CoA + H2O = (2S)-2-isopropylmalate + CoA + H(+). It functions in the pathway amino-acid biosynthesis; L-leucine biosynthesis; L-leucine from 3-methyl-2-oxobutanoate: step 1/4. Catalyzes the condensation of the acetyl group of acetyl-CoA with 3-methyl-2-oxobutanoate (2-ketoisovalerate) to form 3-carboxy-3-hydroxy-4-methylpentanoate (2-isopropylmalate). This Listeria welshimeri serovar 6b (strain ATCC 35897 / DSM 20650 / CCUG 15529 / CIP 8149 / NCTC 11857 / SLCC 5334 / V8) protein is 2-isopropylmalate synthase.